The following is a 358-amino-acid chain: Protein RecA (358 aa).

69-76 (GPESSGKT) lines the ATP pocket.

It belongs to the RecA family.

It localises to the cytoplasm. Functionally, can catalyze the hydrolysis of ATP in the presence of single-stranded DNA, the ATP-dependent uptake of single-stranded DNA by duplex DNA, and the ATP-dependent hybridization of homologous single-stranded DNAs. It interacts with LexA causing its activation and leading to its autocatalytic cleavage. The sequence is that of Protein RecA from Trichormus variabilis (strain ATCC 29413 / PCC 7937) (Anabaena variabilis).